The following is a 644-amino-acid chain: 1-deoxy-D-xylulose-5-phosphate synthase (644 aa).

Thiamine diphosphate is bound by residues H84 and 125–127 (GHS). D156 lines the Mg(2+) pocket. Thiamine diphosphate-binding positions include 157 to 158 (GA), N185, Y296, and E378. Position 185 (N185) interacts with Mg(2+).

Belongs to the transketolase family. DXPS subfamily. In terms of assembly, homodimer. Requires Mg(2+) as cofactor. It depends on thiamine diphosphate as a cofactor.

The catalysed reaction is D-glyceraldehyde 3-phosphate + pyruvate + H(+) = 1-deoxy-D-xylulose 5-phosphate + CO2. Its pathway is metabolic intermediate biosynthesis; 1-deoxy-D-xylulose 5-phosphate biosynthesis; 1-deoxy-D-xylulose 5-phosphate from D-glyceraldehyde 3-phosphate and pyruvate: step 1/1. Functionally, catalyzes the acyloin condensation reaction between C atoms 2 and 3 of pyruvate and glyceraldehyde 3-phosphate to yield 1-deoxy-D-xylulose-5-phosphate (DXP). The protein is 1-deoxy-D-xylulose-5-phosphate synthase of Paramagnetospirillum magneticum (strain ATCC 700264 / AMB-1) (Magnetospirillum magneticum).